The following is a 389-amino-acid chain: D(-)-tartrate dehydratase (389 aa).

Residues N21, N55, K102, Y156, K182, 182–184 (KMK), 213–215 (DAN), E239, E265, H322, and 341–343 (ESY) contribute to the substrate site. K184 (acceptor) is an active-site residue. 3 residues coordinate Mg(2+): D213, E239, and E265. H322 serves as the catalytic Proton donor/acceptor.

It belongs to the mandelate racemase/muconate lactonizing enzyme family. As to quaternary structure, homooctamer; tetramer of dimers. Mg(2+) serves as cofactor.

The catalysed reaction is (S,S)-tartrate = oxaloacetate + H2O. Its function is as follows. Catalyzes the dehydration of D-tartrate to oxaloacetate. This chain is D(-)-tartrate dehydratase (tarD), found in Bradyrhizobium diazoefficiens (strain JCM 10833 / BCRC 13528 / IAM 13628 / NBRC 14792 / USDA 110).